Consider the following 382-residue polypeptide: Anhydro-N-acetylmuramic acid kinase (382 aa).

9-16 (GTSLDGID) serves as a coordination point for ATP.

Belongs to the anhydro-N-acetylmuramic acid kinase family.

It catalyses the reaction 1,6-anhydro-N-acetyl-beta-muramate + ATP + H2O = N-acetyl-D-muramate 6-phosphate + ADP + H(+). It functions in the pathway amino-sugar metabolism; 1,6-anhydro-N-acetylmuramate degradation. The protein operates within cell wall biogenesis; peptidoglycan recycling. Functionally, catalyzes the specific phosphorylation of 1,6-anhydro-N-acetylmuramic acid (anhMurNAc) with the simultaneous cleavage of the 1,6-anhydro ring, generating MurNAc-6-P. Is required for the utilization of anhMurNAc either imported from the medium or derived from its own cell wall murein, and thus plays a role in cell wall recycling. The sequence is that of Anhydro-N-acetylmuramic acid kinase from Bacillus cereus (strain AH820).